The primary structure comprises 120 residues: MDQLIQLVEATQSRTDFPVINPGDTVRIQLKVIEGEKERLQAYEGVVISDRGAGASKTITVRKISHGVGVERIIPVNSPNVESVTVLKHGKARRAKLFYLRKRTGKAALKVKERKFPVKA.

This sequence belongs to the bacterial ribosomal protein bL19 family.

Functionally, this protein is located at the 30S-50S ribosomal subunit interface and may play a role in the structure and function of the aminoacyl-tRNA binding site. The protein is Large ribosomal subunit protein bL19 of Chlorobium limicola (strain DSM 245 / NBRC 103803 / 6330).